The sequence spans 388 residues: Succinyl-diaminopimelate desuccinylase (388 aa).

His-84 lines the Zn(2+) pocket. The active site involves Asp-86. Asp-115 is a binding site for Zn(2+). The active-site Proton acceptor is the Glu-146. 3 residues coordinate Zn(2+): Glu-147, Glu-175, and His-360.

Belongs to the peptidase M20A family. DapE subfamily. In terms of assembly, homodimer. The cofactor is Zn(2+). Requires Co(2+) as cofactor.

It catalyses the reaction N-succinyl-(2S,6S)-2,6-diaminopimelate + H2O = (2S,6S)-2,6-diaminopimelate + succinate. It functions in the pathway amino-acid biosynthesis; L-lysine biosynthesis via DAP pathway; LL-2,6-diaminopimelate from (S)-tetrahydrodipicolinate (succinylase route): step 3/3. Catalyzes the hydrolysis of N-succinyl-L,L-diaminopimelic acid (SDAP), forming succinate and LL-2,6-diaminopimelate (DAP), an intermediate involved in the bacterial biosynthesis of lysine and meso-diaminopimelic acid, an essential component of bacterial cell walls. This Helicobacter pylori (strain J99 / ATCC 700824) (Campylobacter pylori J99) protein is Succinyl-diaminopimelate desuccinylase.